Here is a 403-residue protein sequence, read N- to C-terminus: Ribonuclease T2-like (403 aa).

An N-terminal signal peptide occupies residues 1 to 19; that stretch reads MLALILTISICIFLKGSTC. Disulfide bonds link Cys-36–Cys-55, Cys-44–Cys-91, Cys-54–Cys-158, and Cys-99–Cys-150. Asn-78 carries N-linked (GlcNAc...) asparagine glycosylation. Active-site residues include His-84, Glu-143, and His-147. Asn-175 is a glycosylation site (N-linked (GlcNAc...) asparagine). A disulfide bridge links Cys-224 with Cys-259. Residues 268–288 form a disordered region; sequence PKNGFNPGPQPPKSPRKGYLE.

It belongs to the RNase T2 family.

Its subcellular location is the vacuole lumen. The protein resides in the cytoplasm. The enzyme catalyses a ribonucleotidyl-ribonucleotide-RNA + H2O = a 3'-end 3'-phospho-ribonucleotide-RNA + a 5'-end dephospho-ribonucleoside-RNA + H(+). Rnase which modulates cell survival under stress conditions. Released from the vacuole to the cytoplasm during stress to promote tRNA and rRNA cleavage and to activate separately a downstream pathway that promotes cell death. Involved in cell size, vacuolar morphology and growth at high temperatures and high salt concentration. The polypeptide is Ribonuclease T2-like (RNY1) (Debaryomyces hansenii (strain ATCC 36239 / CBS 767 / BCRC 21394 / JCM 1990 / NBRC 0083 / IGC 2968) (Yeast)).